The following is a 130-amino-acid chain: Small ribosomal subunit protein uS11 (130 aa).

This sequence belongs to the universal ribosomal protein uS11 family. As to quaternary structure, part of the 30S ribosomal subunit. Interacts with proteins S7 and S18. Binds to IF-3.

Its function is as follows. Located on the platform of the 30S subunit, it bridges several disparate RNA helices of the 16S rRNA. Forms part of the Shine-Dalgarno cleft in the 70S ribosome. This Gloeothece citriformis (strain PCC 7424) (Cyanothece sp. (strain PCC 7424)) protein is Small ribosomal subunit protein uS11.